A 189-amino-acid chain; its full sequence is Putative lipoprotein LppK (189 aa).

A signal peptide spans 1–22 (MRRNIRVTLGAATIVAALGLSG). Cys-23 carries N-palmitoyl cysteine lipidation. Residue Cys-23 is the site of S-diacylglycerol cysteine attachment. 2 disordered regions span residues 26 to 49 (PEFK…LEAA) and 166 to 189 (MGNS…TPPG). Over residues 169 to 179 (SPDSTPSATSP) the composition is skewed to low complexity. Pro residues predominate over residues 180–189 (APAPSPTPPG).

The protein belongs to the MTB12 family.

It localises to the cell membrane. This Mycobacterium tuberculosis (strain CDC 1551 / Oshkosh) protein is Putative lipoprotein LppK (lppK).